Here is a 138-residue protein sequence, read N- to C-terminus: MAKQSAKGSTTTKRQRGKRREKKNVPRGQAHIQSTFNNTIVTITDPNGNVVCWSSAGQNGFKGSRKSTPYAAQIAAENAARKAIENGMRQIEVFVKGPGAGREAAIRSLQAAGLQVTAITDVTPIPHNGCRPPKRRRV.

Residues 1–12 (MAKQSAKGSTTT) are compositionally biased toward polar residues. A disordered region spans residues 1–37 (MAKQSAKGSTTTKRQRGKRREKKNVPRGQAHIQSTFN). Positions 13-22 (KRQRGKRREK) are enriched in basic residues.

This sequence belongs to the universal ribosomal protein uS11 family. Part of the 30S ribosomal subunit. Interacts with proteins S7 and S18. Binds to IF-3.

Located on the platform of the 30S subunit, it bridges several disparate RNA helices of the 16S rRNA. Forms part of the Shine-Dalgarno cleft in the 70S ribosome. The protein is Small ribosomal subunit protein uS11 of Roseiflexus castenholzii (strain DSM 13941 / HLO8).